Consider the following 126-residue polypeptide: SPbeta prophage-derived uncharacterized protein YorC (126 aa).

This chain is SPbeta prophage-derived uncharacterized protein YorC (yorC), found in Bacillus subtilis (strain 168).